The chain runs to 352 residues: Glycerol-1-phosphate dehydrogenase [NAD(P)+] (352 aa).

NAD(+) is bound by residues 99–103 (GAKID) and 121–124 (TAPS). Residue aspartate 126 coordinates substrate. Serine 130 is an NAD(+) binding site. Residue aspartate 173 participates in substrate binding. The Zn(2+) site is built by aspartate 173 and histidine 253. Histidine 257 contributes to the substrate binding site. Zn(2+) is bound at residue histidine 269.

This sequence belongs to the glycerol-1-phosphate dehydrogenase family. The cofactor is Zn(2+).

Its subcellular location is the cytoplasm. The catalysed reaction is sn-glycerol 1-phosphate + NAD(+) = dihydroxyacetone phosphate + NADH + H(+). It catalyses the reaction sn-glycerol 1-phosphate + NADP(+) = dihydroxyacetone phosphate + NADPH + H(+). Its pathway is membrane lipid metabolism; glycerophospholipid metabolism. Its function is as follows. Catalyzes the NAD(P)H-dependent reduction of dihydroxyacetonephosphate (DHAP or glycerone phosphate) to glycerol 1-phosphate (G1P). The G1P thus generated is used as the glycerophosphate backbone of phospholipids in the cellular membranes of Archaea. This chain is Glycerol-1-phosphate dehydrogenase [NAD(P)+], found in Thermoplasma acidophilum (strain ATCC 25905 / DSM 1728 / JCM 9062 / NBRC 15155 / AMRC-C165).